Consider the following 504-residue polypeptide: L-carnitine/gamma-butyrobetaine antiporter (504 aa).

12 helical membrane passes run 10–30 (IEPK…WLTV), 51–71 (WGWA…WLVF), 92–112 (IFMM…SIEI), 143–163 (GPLP…FFFV), 195–215 (FYLV…TPLV), 231–251 (LDAI…ACGL), 263–283 (SYLS…SFIM), 316–336 (WTVF…IFLA), 347–367 (LCFG…TVLG), 398–418 (WAAL…CFIA), 446–466 (LLVR…LLAL), and 475–495 (AIIA…LSFI).

This sequence belongs to the BCCT transporter (TC 2.A.15) family. CaiT subfamily. In terms of assembly, homotrimer.

It localises to the cell inner membrane. The catalysed reaction is 4-(trimethylamino)butanoate(in) + (R)-carnitine(out) = 4-(trimethylamino)butanoate(out) + (R)-carnitine(in). The protein operates within amine and polyamine metabolism; carnitine metabolism. Functionally, catalyzes the exchange of L-carnitine for gamma-butyrobetaine. This Escherichia coli O81 (strain ED1a) protein is L-carnitine/gamma-butyrobetaine antiporter.